Reading from the N-terminus, the 228-residue chain is Prophenin-2 (228 aa).

The N-terminal stretch at Met1 to Ala29 is a signal peptide. Positions Gln30–Gln146 are excised as a propeptide. 2 cysteine pairs are disulfide-bonded: Cys85-Cys96 and Cys107-Cys124. 7 tandem repeats follow at residues Phe148–Arg157, Phe158–Arg167, Phe168–Arg177, Phe178–Arg187, Phe188–Pro197, Phe198–Trp207, and Phe208–Pro217. Positions Phe148–Pro217 are 7 X 10 AA tandem repeats. Disordered regions lie at residues Arg167–Gly195 and Trp207–Arg228. Proline amide is present on Pro225. A propeptide spans Gly226–Arg228 (removed in mature form).

This sequence belongs to the cathelicidin family.

Its subcellular location is the secreted. In terms of biological role, exerts antimicrobial activity. It is more effective against Gram-negative bacteria than Gram-positive bacteria. This Sus scrofa (Pig) protein is Prophenin-2.